Reading from the N-terminus, the 340-residue chain is Ketol-acid reductoisomerase (NADP(+)) (340 aa).

Positions 1–182 (MRVYYDRDCD…GGGRSGIIET (182 aa)) constitute a KARI N-terminal Rossmann domain. NADP(+)-binding positions include 24–27 (YGSQ), Arg-48, Ser-51, Ser-53, and 83–86 (DELQ). His-108 is an active-site residue. Gly-134 serves as a coordination point for NADP(+). In terms of domain architecture, KARI C-terminal knotted spans 183–329 (NFRQECETDL…EKLRGMMPWI (147 aa)). Mg(2+)-binding residues include Asp-191, Glu-195, Glu-227, and Glu-231. Residue Ser-252 coordinates substrate.

This sequence belongs to the ketol-acid reductoisomerase family. Mg(2+) serves as cofactor.

It catalyses the reaction (2R)-2,3-dihydroxy-3-methylbutanoate + NADP(+) = (2S)-2-acetolactate + NADPH + H(+). The enzyme catalyses (2R,3R)-2,3-dihydroxy-3-methylpentanoate + NADP(+) = (S)-2-ethyl-2-hydroxy-3-oxobutanoate + NADPH + H(+). It participates in amino-acid biosynthesis; L-isoleucine biosynthesis; L-isoleucine from 2-oxobutanoate: step 2/4. Its pathway is amino-acid biosynthesis; L-valine biosynthesis; L-valine from pyruvate: step 2/4. Functionally, involved in the biosynthesis of branched-chain amino acids (BCAA). Catalyzes an alkyl-migration followed by a ketol-acid reduction of (S)-2-acetolactate (S2AL) to yield (R)-2,3-dihydroxy-isovalerate. In the isomerase reaction, S2AL is rearranged via a Mg-dependent methyl migration to produce 3-hydroxy-3-methyl-2-ketobutyrate (HMKB). In the reductase reaction, this 2-ketoacid undergoes a metal-dependent reduction by NADPH to yield (R)-2,3-dihydroxy-isovalerate. The chain is Ketol-acid reductoisomerase (NADP(+)) from Cereibacter sphaeroides (strain ATCC 17029 / ATH 2.4.9) (Rhodobacter sphaeroides).